The primary structure comprises 556 residues: Formate--tetrahydrofolate ligase (556 aa).

65–72 (TPAGEGKS) contributes to the ATP binding site.

This sequence belongs to the formate--tetrahydrofolate ligase family.

The catalysed reaction is (6S)-5,6,7,8-tetrahydrofolate + formate + ATP = (6R)-10-formyltetrahydrofolate + ADP + phosphate. Its pathway is one-carbon metabolism; tetrahydrofolate interconversion. In Streptococcus mutans serotype c (strain ATCC 700610 / UA159), this protein is Formate--tetrahydrofolate ligase.